Reading from the N-terminus, the 70-residue chain is MPRELTEIKEFLLTARRKDAKSVKIKKNPENTKFKVRCSRFLYTLVITDREKAEKLKQSLPPGLQVKEVK.

It belongs to the eukaryotic ribosomal protein eL38 family.

This is Large ribosomal subunit protein eL38 (RpL38) from Timarcha balearica.